Consider the following 311-residue polypeptide: MSGGRSPMEEAYARLRQVAEQQQKRGGFGGGGLPGGPRGAGMGLAGLVLLGGAAFVAQNALFNVDGGHRAIKYRRTTGVSKEIYAEGTHFVIPWFETPVTYDVRAKPRNVASLTGTKDLQMVNITCRVLSRPDIAALPQIYRTLGTDYDERVLPSIVNEVLKSVVAQFNASQLITQREMVAKLVRENLSRRAARFNILLDDVSLTHLAFSPEFTAAVEAKQVAQQEAQRAAFVVDKARQEKQAMVVKAQGEARSAELIGDAIKKSKAYVELKKIENARFIAQQMQESGSKNRLLLDSEGLGLNVFEDREKN.

The helical transmembrane segment at 39 to 57 threads the bilayer; the sequence is GAGMGLAGLVLLGGAAFVA. The AIM signature appears at 141–144; that stretch reads YRTL.

The protein belongs to the prohibitin family. The mitochondrial prohibitin complex consists of two subunits (PHB1 and PHB2). The subunits assemble into a membrane-associated ring-shaped supercomplex of approximately 1 mDa. Interacts with ATG24/SNX4; the interaction is direct and plays a role in mitophagy.

Its subcellular location is the mitochondrion inner membrane. Prohibitin probably acts as a holdase/unfoldase for the stabilization of newly synthesized mitochondrial proteins. Involved in mitophagy. Required for the switch to necrotrophic growth. In Colletotrichum higginsianum (strain IMI 349063) (Crucifer anthracnose fungus), this protein is Prohibitin-2.